The following is a 186-amino-acid chain: ATP synthase subunit delta (186 aa).

Belongs to the ATPase delta chain family. F-type ATPases have 2 components, F(1) - the catalytic core - and F(0) - the membrane proton channel. F(1) has five subunits: alpha(3), beta(3), gamma(1), delta(1), epsilon(1). F(0) has three main subunits: a(1), b(2) and c(10-14). The alpha and beta chains form an alternating ring which encloses part of the gamma chain. F(1) is attached to F(0) by a central stalk formed by the gamma and epsilon chains, while a peripheral stalk is formed by the delta and b chains.

The protein localises to the cell membrane. Functionally, f(1)F(0) ATP synthase produces ATP from ADP in the presence of a proton or sodium gradient. F-type ATPases consist of two structural domains, F(1) containing the extramembraneous catalytic core and F(0) containing the membrane proton channel, linked together by a central stalk and a peripheral stalk. During catalysis, ATP synthesis in the catalytic domain of F(1) is coupled via a rotary mechanism of the central stalk subunits to proton translocation. This protein is part of the stalk that links CF(0) to CF(1). It either transmits conformational changes from CF(0) to CF(1) or is implicated in proton conduction. The sequence is that of ATP synthase subunit delta from Wolbachia pipientis wMel.